A 323-amino-acid polypeptide reads, in one-letter code: Beta-ketoacyl-[acyl-carrier-protein] synthase III (323 aa).

Residues C113 and H250 contribute to the active site. The ACP-binding stretch occupies residues 251–255 (QANKR). N280 is a catalytic residue.

Belongs to the thiolase-like superfamily. FabH family. Homodimer.

The protein localises to the cytoplasm. It catalyses the reaction malonyl-[ACP] + acetyl-CoA + H(+) = 3-oxobutanoyl-[ACP] + CO2 + CoA. It participates in lipid metabolism; fatty acid biosynthesis. Its function is as follows. Catalyzes the condensation reaction of fatty acid synthesis by the addition to an acyl acceptor of two carbons from malonyl-ACP. Catalyzes the first condensation reaction which initiates fatty acid synthesis and may therefore play a role in governing the total rate of fatty acid production. Possesses both acetoacetyl-ACP synthase and acetyl transacylase activities. Its substrate specificity determines the biosynthesis of branched-chain and/or straight-chain of fatty acids. The chain is Beta-ketoacyl-[acyl-carrier-protein] synthase III from Chelativorans sp. (strain BNC1).